We begin with the raw amino-acid sequence, 311 residues long: Putative dihydroorotate dehydrogenase A (fumarate) (311 aa).

Substrate contacts are provided by residues Lys45, 69-73 (NSMGL), and Asn128. 45–46 (KT) provides a ligand contact to FMN. Asn128 contributes to the FMN binding site. Catalysis depends on Cys131, which acts as the Nucleophile. Positions 165 and 193 each coordinate FMN. Substrate is bound at residue 194–195 (NS). Residues Gly220, 248–249 (GG), and 270–271 (GT) contribute to the FMN site.

The protein belongs to the dihydroorotate dehydrogenase family. Type 1 subfamily. Homodimer. Requires FMN as cofactor.

It is found in the cytoplasm. It catalyses the reaction (S)-dihydroorotate + fumarate = orotate + succinate. The protein operates within pyrimidine metabolism; UMP biosynthesis via de novo pathway. Its function is as follows. Catalyzes the conversion of dihydroorotate to orotate with fumarate as the electron acceptor. This is Putative dihydroorotate dehydrogenase A (fumarate) (pyrD) from Streptococcus pyogenes serotype M1.